The following is a 107-amino-acid chain: CRISPR-associated endoribonuclease Cas2 (107 aa).

Residue aspartate 6 coordinates Mg(2+).

The protein belongs to the CRISPR-associated endoribonuclease Cas2 protein family. As to quaternary structure, homodimer, forms a heterotetramer with a Cas1 homodimer. Mg(2+) is required as a cofactor.

Functionally, CRISPR (clustered regularly interspaced short palindromic repeat), is an adaptive immune system that provides protection against mobile genetic elements (viruses, transposable elements and conjugative plasmids). CRISPR clusters contain sequences complementary to antecedent mobile elements and target invading nucleic acids. CRISPR clusters are transcribed and processed into CRISPR RNA (crRNA). Functions as a ssRNA-specific endoribonuclease. Involved in the integration of spacer DNA into the CRISPR cassette. This is CRISPR-associated endoribonuclease Cas2 from Streptococcus mutans serotype c (strain NN2025).